The sequence spans 128 residues: U24-ctenitoxin-Pn1a (128 aa).

Thyroglobulin type-1 domains follow at residues 4-67 (KSDC…ECGC) and 72-127 (KERK…SLKC). Cystine bridges form between cysteine 7–cysteine 27, cysteine 38–cysteine 45, cysteine 47–cysteine 67, and cysteine 107–cysteine 127.

Expressed by the venom gland.

It localises to the secreted. Its function is as follows. Cysteine proteinase inhibitor. The protein is U24-ctenitoxin-Pn1a of Phoneutria nigriventer (Brazilian armed spider).